The primary structure comprises 303 residues: Haloalkane dehalogenase (303 aa).

Residues 48 to 192 (PVLLLHGEPS…GTVTKLSQAV (145 aa)) form the AB hydrolase-1 domain. The active-site Nucleophile is the aspartate 123. Aspartate 250 acts as the Proton donor in catalysis. Residue histidine 280 is the Proton acceptor of the active site.

This sequence belongs to the haloalkane dehalogenase family. Type 1 subfamily. In terms of assembly, monomer.

It catalyses the reaction 1-haloalkane + H2O = a halide anion + a primary alcohol + H(+). In terms of biological role, catalyzes hydrolytic cleavage of carbon-halogen bonds in halogenated aliphatic compounds, leading to the formation of the corresponding primary alcohols, halide ions and protons. This Psychrobacter cryohalolentis (strain ATCC BAA-1226 / DSM 17306 / VKM B-2378 / K5) protein is Haloalkane dehalogenase.